Consider the following 4226-residue polypeptide: MSDSKKHYNESNVRYKVKYSGKIFGNNMKKLNENNNHDFTTAEAAWMEKKKKLYKDTNNQPLWDFRKIQINPTETDELISFPSNKICSKNYGKYSFIFKGLYEQFLRLPNIWFLLISLLEFIPQYQNLSNYMYYSKHSSFFLLLFFICVSIIKNIYEDSRRSNIDYQINNRLCHMLDGPNSQLKAVRWMELSVGSIIRLIENEQVPADILLLSCNNSEGVVYIETSLLNGETNLNKKYCVNETRNETSIYAISNIRGRIVCEKPNSNMESFNGSLKLDAHPRATSLSINNVIFKGSHIKNTEYIFGVILYTGNDTKIMKNISNNKHKLGYVNKELNSYTIIGLIFTFICVFISVLFKWTEDDKFRNGSHFFLITVKDNICESIVKYTLLYSNIIPISILISVDLISILQSILIENDNHISTFENYETSEPSTIDDMDNELGDFKMDKSHTFFKKYTYFLNNRSKNFTNNRYSSTNTERASDFRKSFFGTFDKLKTIKRYFYSIKSKIKSISQSNTLYNKSSAGGSIIRSDKNKQTTFSKSFIDIFQRTNNNEHSQTLDNNNNNDNNNNNNICKEKYQNVNNSKNVYVSEDSSNNKYKQNDYLQKSQEQNEIHSINNNNYNNKNDNNLQTEFSNHNFRINAYKTNRTTKDDTYNNKHISLNSRSKSNQKGILINSNEINRKKKKNLLQKIFPFFKKKRTNISEDLSKYVFRRSKQLNINHNNSEKYNLNDYDEYGWGLCLNSNMHGDLGNVDFIFTDKTGTLTNNNMTFNMCSIAGKTYGSKCKNKKKIYNNPKSNNDNKLNSYDKNIFKNKFSSEASIKKISFVRDFSNNVSSKNDLTLDDPTELISDEGNNYLRDKYEHTSDKKNDTNKNRDGANNSNNNNNKDVSNNKNKNNNNYNYNSNNDYIKQNGECNIYNNQNNTNNTHNNNIYYDEYNNTNEGNMKNTNVNKDTNSKCNKKDFIINTSDIINNNNNNNNDQKTNNLKYKSSSSWNSKAKKSSYINLNSYNKYQSFQNSSMLSSSLSSTCSSETEDENGSQLMYYSSSNYDNLDINNDMDSTKTYSHYTEQNYYNSVKDDKDINSEHQRYQQKKTNKQTKNIQQNQCDQWEDNRYTQESIKNQYFFDRNYQTFLMKQNFPRPKSFRLNMNSSSVKGRCDFNDTKIYNDLNSQSWRGYYIDEFFKCMTLCHAVTPFIQFDYIRNKHLTYTNSRSSKGISNNMDRYNINPTTTTTNNNNNNNNINNINNINNNNNNNNNNNNNKQFSCDYMKNRNDIIFETSTDYYANQDNAKRKREKTLFDNVSHCGEIQEYRDNKKYRMKRSQTCSNNRKIFSNQRTLYDYRNMNNNLKNKNSYLRNKLKSKIFLDKSYRKRKKSSGTYKGSDICKGIEKKETRRWKRFLHMKGSNNRNIFSRIKDFKSNSIIYNNQDKTNDYKNGYSNNINNNNSNNYTNEKINRSFNKRHSAVSFKQMSKEKLIPINNVLSNRCDVESYPNEELSFSKKKKKNSEIVSFASGKSDIGFEERTDAGIAGKNMELSYNELEKYKYVKHIDSNNKYINNNNNSIHMSHMSSNNNTFESHIYFDAIKYQSSSLDEECLIYSSSFLGYRLVLRNKNTMCIEIDGSFNKWTIIGVNEFTNRRGKMSIVVKPDSMESGSILYVKGSDSSILSLLNLKYSKFLDKKYSRKRRNKNIQKYKQKREEYNELKSKDINIEEFQKSKSLSLKNFKNNTPKVLFGECTLDNNNNNINKNYKYDKNDKHNNNNNNNNNNSNYSYNYLHDSNNLDAMQNQKYSYAYEDKEDYYYTNNGECNKYKERYRRLEKQLRKFSVKGLRSMIFAFRYLSEEETIKYKRMYDDACSSIYNKEQRLEKVAEEFERDLIYLGITGVKNGLQEKVPKTIDILNQSGIRIWMLTGDNVEYSLHVSFLCKFLNKHTKIFHAALENSNAKKLKREGMALYELFQLEKEEKKPYENLCLLVNGRNLQTFLNYTDLQTHFLNMACTCDVVIACRITAKQKAFLVQLIKNRLYPTPNTLAIGDGANDIAMIQEANIGVSIMTSDCIISAGYSDYCIKKFCYLRKLLFIYGSKHLYTISIILYWNFFKNILLILPIFFYQAYASWSCVKIYPELLYTFFSIFWVFIPIIYYMFLQHNLNYDILYNIPLFYALSRRRYNMNCFKFLPWIFEAIFYSMIIYFFAYAALKENSHLNNGEVITINTFGNICFIGCLLISILRLFLEGSLWSPSILITCFGCFLFVFFPSLLFICFAYLSNEYIREVFRQTFLWAPLYVLLILWFSTCIISYIFINFTKSILFPNIYNVVNHWLFEQYQEKHNKNKYIFSLSGKNKFLKLRKLGKKIKFKFKRNYSKKYDTNVIREHPLLHHTFKSEQDQNKCNEQFSKDPFISNSLLKSKNCKFKKDSSYSKSNIHVDEEQTYKGLKVVLSEQVVHAKENLVSFKNEKKNKNNKNTSMNVNDNIIIKNNNINIKNNDNNNDDNDNDNNNNNNNNDNYNNNDHNKKEFKQKHIQNNYENLFNHTQVENNLIKENLSIRNDNNRRDNKNETDYIKQSDEDYEMNPSITSLRKRECINDSKYIDNKSYDNKISNNHEEKDGFKSDDRSLINSNMMDYKNEFTENDTTYSFNDSHMFYDFPSNSKTTKDYKVINSRIDDSIMADMKNCLNPLKNTFLVDLLPPGKRFRINEDHIYFKNNERMENIPEALDVNKKYYHIIQNKAEYYDNDSLSEFSYTSSNSSINNKKKNENTQKEIVKVSHLINRFTLAFKDMQLESGFQIHKKNKFYKTFTPWYRFIFLLLGVFFLYVWKLESSLSQLWNMPSDASTDVFILFLSLLLELVLLAATVTTFFSNIFIENFNKIISAVVILIITYHVVSYSVTHIDGVFQAVLFPLYTFVILRLPFVNAVLCNIIFLGLFIIRFNGDHFLDKKGLAHYIPLFIGVDVFVGFVGYRLEYNQRKNFLLEYSVESSRRKQREILNTMLPPFVVDEMIYSELNEEGIPISLKAEDISTVTIIFCDIYDFQNIVASIEPTRLVEVLDRLFLCFDKCTEQFNCTKIETVFETYLAACGLVKREKDEDELENNKYSNNNKNNNNNYYYNRKKKKKKNNNNNNNNNNNNNNNNNNNNNLNNNNNNNNVNTSDDDGDFFEEDDANNHQIYNQMKGQEDAHDSIDFALSILHVSSHIKYEKSKMMLKKNDSFEDANDDTHNVNDSFNNDKAENDNTNTDNNKPTRIRVKVGIHSGRIIAGVVGSKKPQYALFGDTVNTASRMKTTGKPDYIHISEATYNLVKDDKTLIYEKKETEIKGKGIMTTYLLTSVIGLNYPFLGEHVEKKGHFISELYEDDLSNNLNYDKTQNILGYYSNKINQNNDSNINEGIINNNMNTFNTIDGDTSNYYVNLKDLSLNDLPNEYIKDVNTHYCEIIKLRNLKIGTAVGYQLKQKDFYNMTFLNNGLNNDTATNFNQYIESHKDFDDIKDLRIGMNKLSISDSLYYLNENVIRNEPINEYKNKIKINSVNTNKKSYEDAHLNAGNIIYTNNEYPNGQNIEEDDDLLLTNHYNKTNVNNNNNNNIYDVSKELIEHNEEDYKNILMCSKRCKNCNETYCTPNDCNNNDHVYHVMYHRKLSNIKKNYLKNIRKDANIKKDIEKEELNKIHSNKKSFNFFYLFSYIFKIFPFIGKINKEEKKNKSYKKGEQDKSSKRIIALNSEWIFLKFSDKNLEAKYRAHFYSNKSNINSIEQALIIFLVTFVMQTLISSTVSIVFIDHKRATQTLHINYFAYWSVRSVYTFFGFVLWLLFHYRTRPEVSSLLNIKWMIFFLNLLFISAACVFSIAYLWAISETDQTTSYTIWMTNDTIEFFFYLVILHHNTGMLFQTCILVDLLFITMSLTFIATSVVKTITTDSTVLLIPWYVAFNLISTYCKESIDRRTFYANESAKKTENRATELLNDMLPKHVLEEFQQDKLKLAYTHDRLTFLFADICGFTSWANGVDASEVLTLLQKLFAKFDNDSTKYGLYKLCTIGDAYVAISEPVTEDNKDYDPVDGTERVLEMAYSMIRIIKEIREKLYIPNLNMRIGLHYGSCVGGVIGSGRLRYDLWGIDVLTGNLMESNGIPGKINVSETLKNFLLQQFKNRFIFKPHTTIRVIYKDVKCFIITDKKEVESSNHSKLLQNKNYLLNKKFSTQNYLVKNIFAKKKHSSISSSKNIHSYDEKKKKKNDLFYINVNDRQSNL.

At 1–104 the chain is on the cytoplasmic side; that stretch reads MSDSKKHYNE…SFIFKGLYEQ (104 aa). A helical transmembrane segment spans residues 105–125; the sequence is FLRLPNIWFLLISLLEFIPQY. At 126 to 131 the chain is on the extracellular side; it reads QNLSNY. N-linked (GlcNAc...) asparagine glycosylation occurs at Asn127. The chain crosses the membrane as a helical span at residues 132–152; the sequence is MYYSKHSSFFLLLFFICVSII. The Cytoplasmic portion of the chain corresponds to 153-337; sequence KNIYEDSRRS…LGYVNKELNS (185 aa). Residues 338–358 form a helical membrane-spanning segment; sequence YTIIGLIFTFICVFISVLFKW. Residues 359-392 are Extracellular-facing; sequence TEDDKFRNGSHFFLITVKDNICESIVKYTLLYSN. Asn366 carries N-linked (GlcNAc...) asparagine glycosylation. A helical transmembrane segment spans residues 393–413; the sequence is IIPISILISVDLISILQSILI. At 414–2083 the chain is on the cytoplasmic side; that stretch reads ENDNHISTFE…FIYGSKHLYT (1670 aa). Disordered regions lie at residues 552–572, 832–904, 968–989, and 1740–1765; these read EHSQ…NNIC, SSKN…SNND, INNN…KSSS, and NINK…NNSN. The segment covering 558-570 has biased composition (low complexity); the sequence is DNNNNNDNNNNNN. A compositionally biased stretch (acidic residues) spans 838–847; that stretch reads TLDDPTELIS. Positions 854–873 are enriched in basic and acidic residues; sequence LRDKYEHTSDKKNDTNKNRD. Residues 874–904 are compositionally biased toward low complexity; that stretch reads GANNSNNNNNKDVSNNKNKNNNNYNYNSNND. Positions 1745–1754 are enriched in basic and acidic residues; the sequence is YKYDKNDKHN. Over residues 1755–1765 the composition is skewed to low complexity; the sequence is NNNNNNNNNSN. The helical transmembrane segment at 2084–2104 threads the bilayer; that stretch reads ISIILYWNFFKNILLILPIFF. Residues 2105-2119 lie on the Extracellular side of the membrane; sequence YQAYASWSCVKIYPE. A helical membrane pass occupies residues 2120 to 2140; it reads LLYTFFSIFWVFIPIIYYMFL. At 2141–2169 the chain is on the cytoplasmic side; the sequence is QHNLNYDILYNIPLFYALSRRRYNMNCFK. A helical membrane pass occupies residues 2170–2190; it reads FLPWIFEAIFYSMIIYFFAYA. Topologically, residues 2191 to 2202 are extracellular; it reads ALKENSHLNNGE. The chain crosses the membrane as a helical span at residues 2203–2223; that stretch reads VITINTFGNICFIGCLLISIL. Residues 2224–2235 are Cytoplasmic-facing; sequence RLFLEGSLWSPS. A helical transmembrane segment spans residues 2236-2256; it reads ILITCFGCFLFVFFPSLLFIC. The Extracellular segment spans residues 2257–2275; sequence FAYLSNEYIREVFRQTFLW. A helical transmembrane segment spans residues 2276–2296; that stretch reads APLYVLLILWFSTCIISYIFI. Over 2297-2787 the chain is Cytoplasmic; the sequence is NFTKSILFPN…QIHKKNKFYK (491 aa). Residues 2477–2505 are disordered; the sequence is NNDNNNDDNDNDNNNNNNNNDNYNNNDHN. Over residues 2488-2502 the composition is skewed to low complexity; sequence DNNNNNNNNDNYNNN. Residues 2788 to 2808 form a helical membrane-spanning segment; that stretch reads TFTPWYRFIFLLLGVFFLYVW. Over 2809–2828 the chain is Extracellular; it reads KLESSLSQLWNMPSDASTDV. A helical transmembrane segment spans residues 2829–2849; it reads FILFLSLLLELVLLAATVTTF. Residues 2850 to 2860 lie on the Cytoplasmic side of the membrane; it reads FSNIFIENFNK. The chain crosses the membrane as a helical span at residues 2861-2881; it reads IISAVVILIITYHVVSYSVTH. Residues 2882 to 2900 lie on the Extracellular side of the membrane; sequence IDGVFQAVLFPLYTFVILR. The helical transmembrane segment at 2901-2921 threads the bilayer; it reads LPFVNAVLCNIIFLGLFIIRF. Over 2922–2930 the chain is Cytoplasmic; that stretch reads NGDHFLDKK. Residues 2931-2951 traverse the membrane as a helical segment; the sequence is GLAHYIPLFIGVDVFVGFVGY. Residues 2952–3008 are Extracellular-facing; sequence RLEYNQRKNFLLEYSVESSRRKQREILNTMLPPFVVDEMIYSELNEEGIPISLKAED. Residues 3009–3029 traverse the membrane as a helical segment; that stretch reads ISTVTIIFCDIYDFQNIVASI. A Guanylate cyclase 1 domain is found at 3013–3270; sequence TIIFCDIYDF…DTVNTASRMK (258 aa). Residues 3030–3738 lie on the Cytoplasmic side of the membrane; it reads EPTRLVEVLD…SNINSIEQAL (709 aa). 2 disordered regions span residues 3077–3150 and 3201–3230; these read EDEL…FEED and DAND…NNKP. Composition is skewed to low complexity over residues 3083 to 3098 and 3108 to 3138; these read NKYS…NYYY and NNNN…NNVN. Over residues 3140 to 3150 the composition is skewed to acidic residues; that stretch reads SDDDGDFFEED. Residues 3201–3220 show a composition bias toward basic and acidic residues; sequence DANDDTHNVNDSFNNDKAEN. The chain crosses the membrane as a helical span at residues 3739–3759; sequence IIFLVTFVMQTLISSTVSIVF. Over 3760-3773 the chain is Extracellular; it reads IDHKRATQTLHINY. Residues 3774–3794 form a helical membrane-spanning segment; it reads FAYWSVRSVYTFFGFVLWLLF. The Cytoplasmic segment spans residues 3795–3811; it reads HYRTRPEVSSLLNIKWM. Residues 3812–3832 traverse the membrane as a helical segment; the sequence is IFFLNLLFISAACVFSIAYLW. At 3833–3840 the chain is on the extracellular side; it reads AISETDQT. Residues 3841–3861 form a helical membrane-spanning segment; that stretch reads TSYTIWMTNDTIEFFFYLVIL. The Cytoplasmic portion of the chain corresponds to 3862-3871; the sequence is HHNTGMLFQT. Residues 3872-3892 traverse the membrane as a helical segment; that stretch reads CILVDLLFITMSLTFIATSVV. A topological domain (extracellular) is located at residue Lys3893. The chain crosses the membrane as a helical span at residues 3894 to 3914; it reads TITTDSTVLLIPWYVAFNLIS. Residues 3915 to 4226 lie on the Cytoplasmic side of the membrane; it reads TYCKESIDRR…INVNDRQSNL (312 aa). The 135-residue stretch at 3970-4104 folds into the Guanylate cyclase 2 domain; sequence TFLFADICGF…IDVLTGNLME (135 aa). Residues Asp3975, Ile3976, and Asp4019 each coordinate Mg(2+).

The protein in the N-terminal section; belongs to the cation transport ATPase (P-type) (TC 3.A.3) family. Type IV subfamily. It in the C-terminal section; belongs to the adenylyl cyclase class-4/guanylyl cyclase family. Mg(2+) is required as a cofactor. Mn(2+) serves as cofactor.

It is found in the cell membrane. It localises to the cytoplasmic vesicle membrane. It catalyses the reaction GTP = 3',5'-cyclic GMP + diphosphate. Its function is as follows. Catalyzes the synthesis of the second messenger cGMP from GTP. In asexual blood stage schizonts, required for cGMP production which is essential for PKG activation, PKG-dependent Ca(2+) release, and ultimately merozoite egress from host erythrocytes. In Plasmodium falciparum (isolate 3D7), this protein is Guanylate cyclase alpha.